Here is a 664-residue protein sequence, read N- to C-terminus: MDNKLEKMKELVEELNQYAYEYYVLDNPSISDKEYDLKYDELVILEKKTEVTLPYSPTQRVGDKILGEFSKYTHKGRLWSLDKAQNMEQLIEWHNRNLKVIEQYNSMSEDKLPELRYIVTKKFDGLTVNCTYDENGILIKSATRGTGIIGEDITAQIKTIKTVPLKIKNNHVIEVHGEAIMTKTAFEEYNKAAQVPLKNLRNGAAGALRNLDIKETARRNLSAFFYDVGYNEGPEFKSYREMMNFIKNMGLPQDKYIKECTNMEEVEKEIEYIESIRGELDYDIDGAVIVVDDIKTREILGYTIKFPKWAIAYKFEAKEITTKLLDVEWNVGRSGRVTPTALLEPVELGGVTVKRATLNNMDDIKRKNVKLGAKVLVRRSNDVIPEIMGVVEESLEESKEIQAPDRCPYCNSHLVQNGVHYYCENTLSCKPQMVKSIVHFASREAMNIAGFSEKTAEQLFEKLDIKSIADLYKIKKEELLTLEKFKDKKSQNLIDAIQNSKNCDLASFIYALGIPNVGKKTANDLVMKFKTLESIKNTTIEQLVEVPDVGEIVAKSIYDFFEDEKVISNIEELLNLGVKPYYEEERIDENPFMDKTIVVTGSLNNYSRGEIKDKLQSLGAKVSSSVSKNTDYVLVGEKPGSKYEKAIELGVKVINEEEFSNKIK.

NAD(+) contacts are provided by residues 32-36 and 80-81; these read DKEYD and SL. Lys122 functions as the N6-AMP-lysine intermediate in the catalytic mechanism. NAD(+)-binding residues include Arg144, Glu178, and Lys314. 4 residues coordinate Zn(2+): Cys407, Cys410, Cys423, and Cys429. The 78-residue stretch at 587 to 664 folds into the BRCT domain; it reads IDENPFMDKT…NEEEFSNKIK (78 aa).

Belongs to the NAD-dependent DNA ligase family. LigA subfamily. Mg(2+) serves as cofactor. The cofactor is Mn(2+).

It carries out the reaction NAD(+) + (deoxyribonucleotide)n-3'-hydroxyl + 5'-phospho-(deoxyribonucleotide)m = (deoxyribonucleotide)n+m + AMP + beta-nicotinamide D-nucleotide.. In terms of biological role, DNA ligase that catalyzes the formation of phosphodiester linkages between 5'-phosphoryl and 3'-hydroxyl groups in double-stranded DNA using NAD as a coenzyme and as the energy source for the reaction. It is essential for DNA replication and repair of damaged DNA. This Clostridium botulinum (strain ATCC 19397 / Type A) protein is DNA ligase.